A 156-amino-acid polypeptide reads, in one-letter code: Ribosome maturation factor RimP (156 aa).

The protein belongs to the RimP family.

Its subcellular location is the cytoplasm. In terms of biological role, required for maturation of 30S ribosomal subunits. This chain is Ribosome maturation factor RimP, found in Exiguobacterium sp. (strain ATCC BAA-1283 / AT1b).